The chain runs to 208 residues: uncharacterized protein (208 aa).

Disordered stretches follow at residues 74–117 (FEYK…RDSP) and 181–208 (ESKL…RKFK). Positions 184–208 (LGSSEDSGTDRFSSNTSGSSGRKFK) are enriched in polar residues.

This is an uncharacterized protein from Mus musculus (Mouse).